The primary structure comprises 272 residues: Glutamate racemase (272 aa).

Substrate is bound by residues 9–10 and 41–42; these read DS and YG. Cysteine 73 (proton donor/acceptor) is an active-site residue. 74-75 lines the substrate pocket; it reads NT. Cysteine 183 acts as the Proton donor/acceptor in catalysis. 184 to 185 contributes to the substrate binding site; the sequence is TH.

The protein belongs to the aspartate/glutamate racemases family.

It catalyses the reaction L-glutamate = D-glutamate. Its pathway is cell wall biogenesis; peptidoglycan biosynthesis. Provides the (R)-glutamate required for cell wall biosynthesis. This is Glutamate racemase from Shewanella sp. (strain MR-4).